The chain runs to 340 residues: Phospho-N-acetylmuramoyl-pentapeptide-transferase (340 aa).

10 helical membrane passes run 3-23 (MSLI…PHFI), 53-73 (GGTV…FHVF), 79-99 (AYGA…IGFL), 119-139 (MALQ…PSGT), 144-164 (IGGL…FWIV), 176-196 (IDGL…IIAF), 200-220 (ELAI…FFVF), 227-247 (VFMG…ISIA), 250-270 (VEWT…SVML), and 315-335 (VDAF…WMVL).

The protein belongs to the glycosyltransferase 4 family. MraY subfamily. It depends on Mg(2+) as a cofactor.

It localises to the cell membrane. It carries out the reaction UDP-N-acetyl-alpha-D-muramoyl-L-alanyl-gamma-D-glutamyl-L-lysyl-D-alanyl-D-alanine + di-trans,octa-cis-undecaprenyl phosphate = Mur2Ac(oyl-L-Ala-gamma-D-Glu-L-Lys-D-Ala-D-Ala)-di-trans,octa-cis-undecaprenyl diphosphate + UMP. The protein operates within cell wall biogenesis; peptidoglycan biosynthesis. Catalyzes the initial step of the lipid cycle reactions in the biosynthesis of the cell wall peptidoglycan: transfers peptidoglycan precursor phospho-MurNAc-pentapeptide from UDP-MurNAc-pentapeptide onto the lipid carrier undecaprenyl phosphate, yielding undecaprenyl-pyrophosphoryl-MurNAc-pentapeptide, known as lipid I. The protein is Phospho-N-acetylmuramoyl-pentapeptide-transferase of Streptococcus thermophilus (strain CNRZ 1066).